The primary structure comprises 984 residues: Ephrin type-B receptor 1 (984 aa).

The first 17 residues, 1-17 (MALDYLLLLLLASAVAA), serve as a signal peptide directing secretion. The Extracellular segment spans residues 18-540 (MEETLMDTRT…YKSELREQLP (523 aa)). Residues 19-201 (EETLMDTRTA…FFKKCPSIVQ (183 aa)) enclose the Eph LBD domain. Fibronectin type-III domains are found at residues 322-432 (VPSG…TNQA) and 433-528 (APST…TLTD). 3 N-linked (GlcNAc...) asparagine glycosylation sites follow: asparagine 334, asparagine 426, and asparagine 480. Residues 541-563 (LIAGSAAAGVVFVVSLVAISIVC) form a helical membrane-spanning segment. The Cytoplasmic segment spans residues 564–984 (SRKRAYSKEA…QISQSPTAMA (421 aa)). Position 600 is a phosphotyrosine (tyrosine 600). Residues 619 to 882 (VKIEEVIGAG…EIVNTLDKMI (264 aa)) form the Protein kinase domain. ATP is bound by residues 625-633 (IGAGEFGEV) and lysine 651. Catalysis depends on aspartate 744, which acts as the Proton acceptor. The SAM domain maps to 911 to 975 (TAFTTVDDWL…LNSIHSMRVQ (65 aa)). The residue at position 928 (tyrosine 928) is a Phosphotyrosine; by autocatalysis. The PDZ-binding signature appears at 982–984 (AMA).

This sequence belongs to the protein kinase superfamily. Tyr protein kinase family. Ephrin receptor subfamily. Heterotetramer upon binding of the ligand. The heterotetramer is composed of an ephrin dimer and a receptor dimer. Oligomerization is probably required to induce biological responses. Interacts with EPHB6; transphosphorylates EPHB6 to form an active signaling complex. Interacts with PICK1. Interacts (through Tyr-594) with NCK1 (via SH2 domain); activates the JUN cascade to regulate cell adhesion. The ligand-activated form interacts (through Tyr-928) with GRB7 and GRB10 (via SH2 domains). The ligand-activated form interacts (residues within the catalytic domain) with GRB2 (via SH2 domain). Interacts with GRB2, SHC1 and SRC; activates the MAPK/ERK cascade to regulate cell migration. Interacts with CBL; regulates receptor degradation through ubiquitination. Interacts with ACP1. In terms of processing, phosphorylated. Autophosphorylation is stimulated by the ligand EFNB1. Required for interaction with SH2 domain-containing interactors, for activation of the MAPK/ERK and JUN signaling cascades and for ubiquitination by CBL. Post-translationally, ubiquitinated; (EFNB1)ligand-induced poly- and/or multi-ubiquitination by CBL is regulated by SRC and leads to lysosomal degradation. In terms of tissue distribution, preferentially expressed in brain.

It localises to the cell membrane. The protein localises to the early endosome membrane. Its subcellular location is the cell projection. The protein resides in the dendrite. It catalyses the reaction L-tyrosyl-[protein] + ATP = O-phospho-L-tyrosyl-[protein] + ADP + H(+). In terms of biological role, receptor tyrosine kinase which binds promiscuously transmembrane ephrin-B family ligands residing on adjacent cells, leading to contact-dependent bidirectional signaling into neighboring cells. The signaling pathway downstream of the receptor is referred to as forward signaling while the signaling pathway downstream of the ephrin ligand is referred to as reverse signaling. Cognate/functional ephrin ligands for this receptor include EFNB1, EFNB2 and EFNB3. During nervous system development, regulates retinal axon guidance redirecting ipsilaterally ventrotemporal retinal ganglion cells axons at the optic chiasm midline. This probably requires repulsive interaction with EFNB2. In the adult nervous system together with EFNB3, regulates chemotaxis, proliferation and polarity of the hippocampus neural progenitors. In addition to its role in axon guidance also plays an important redundant role with other ephrin-B receptors in development and maturation of dendritic spines and synapse formation. May also regulate angiogenesis. More generally, may play a role in targeted cell migration and adhesion. Upon activation by EFNB1 and probably other ephrin-B ligands activates the MAPK/ERK and the JNK signaling cascades to regulate cell migration and adhesion respectively. Involved in the maintenance of the pool of satellite cells (muscle stem cells) by promoting their self-renewal and reducing their activation and differentiation. This is Ephrin type-B receptor 1 (EPHB1) from Homo sapiens (Human).